The chain runs to 170 residues: NADH-dependent flavin reductase StyB (170 aa).

The protein belongs to the non-flavoprotein flavin reductase family. In terms of assembly, homodimer.

The catalysed reaction is a reduced flavin + NAD(+) = an oxidized flavin + NADH + 2 H(+). Its pathway is aromatic compound metabolism. Functionally, reductase component of a two-component system that catalyzes the first step in the aerobic styrene degradation pathway by enantioselective epoxidation of the vinyl side chain. Utilizes NADH to reduce FAD, which is then transferred to the styrene monooxygenase StyA. This Pseudomonas fluorescens protein is NADH-dependent flavin reductase StyB (styB).